A 100-amino-acid chain; its full sequence is Large ribosomal subunit protein uL23 (100 aa).

It belongs to the universal ribosomal protein uL23 family. In terms of assembly, part of the 50S ribosomal subunit. Contacts protein L29, and trigger factor when it is bound to the ribosome.

Functionally, one of the early assembly proteins it binds 23S rRNA. One of the proteins that surrounds the polypeptide exit tunnel on the outside of the ribosome. Forms the main docking site for trigger factor binding to the ribosome. In Xylella fastidiosa (strain 9a5c), this protein is Large ribosomal subunit protein uL23.